We begin with the raw amino-acid sequence, 125 residues long: UPF0102 protein ABO_0585 (125 aa).

It belongs to the UPF0102 family.

The protein is UPF0102 protein ABO_0585 of Alcanivorax borkumensis (strain ATCC 700651 / DSM 11573 / NCIMB 13689 / SK2).